The sequence spans 394 residues: MAKEKFDRSKEHANIGTIGHVDHGKTTLTAAIATVLAKNGDTVAQSYDMIDNAPEEKERGITINTAHIEYQTDKRHYAHVDCPGHADYVKNMITGAAQMDGGILVVSAADGPMPQTREHILLSRNVGVPALVVFLNKVDMVDDEELLELVEMEVRDLLSEYDFPGDDVPVIAGSALKALEGDAQYEEKILELMQAVDDYIPTPERDSDKPFMMPVEDVFSITGRGTVATGRVERGQIKVGEEVEIIGIHDTSKTTVTGVEMFRKLLDYAEAGDNIGALLRGVAREDVQRGQVLAAPGSITPHTKFKADVYVLSKDEGGRHTPFFTNYRPQFYFRTTDVTGVVNLPEGTEMVMPGDNVEMTVELIAPIAIEDGTRFSIREGGRTVGSGVVTEIIE.

The tr-type G domain occupies 10-204; it reads KEHANIGTIG…AVDDYIPTPE (195 aa). Positions 19 to 26 are G1; sequence GHVDHGKT. 19-26 contributes to the GTP binding site; sequence GHVDHGKT. Mg(2+) is bound at residue threonine 26. The segment at 60 to 64 is G2; sequence GITIN. The G3 stretch occupies residues 81 to 84; sequence DCPG. Residues 81 to 85 and 136 to 139 each bind GTP; these read DCPGH and NKVD. The G4 stretch occupies residues 136–139; that stretch reads NKVD. The tract at residues 174-176 is G5; it reads SAL.

The protein belongs to the TRAFAC class translation factor GTPase superfamily. Classic translation factor GTPase family. EF-Tu/EF-1A subfamily. As to quaternary structure, monomer.

The protein resides in the cytoplasm. The enzyme catalyses GTP + H2O = GDP + phosphate + H(+). Functionally, GTP hydrolase that promotes the GTP-dependent binding of aminoacyl-tRNA to the A-site of ribosomes during protein biosynthesis. In Staphylococcus haemolyticus (strain JCSC1435), this protein is Elongation factor Tu.